The primary structure comprises 247 residues: 3-deoxy-manno-octulosonate cytidylyltransferase (247 aa).

Belongs to the KdsB family.

It localises to the cytoplasm. The catalysed reaction is 3-deoxy-alpha-D-manno-oct-2-ulosonate + CTP = CMP-3-deoxy-beta-D-manno-octulosonate + diphosphate. Its pathway is nucleotide-sugar biosynthesis; CMP-3-deoxy-D-manno-octulosonate biosynthesis; CMP-3-deoxy-D-manno-octulosonate from 3-deoxy-D-manno-octulosonate and CTP: step 1/1. It participates in bacterial outer membrane biogenesis; lipopolysaccharide biosynthesis. Activates KDO (a required 8-carbon sugar) for incorporation into bacterial lipopolysaccharide in Gram-negative bacteria. The sequence is that of 3-deoxy-manno-octulosonate cytidylyltransferase from Methylorubrum extorquens (strain PA1) (Methylobacterium extorquens).